The sequence spans 88 residues: Protein WIR1A (88 aa).

At 1–13 the chain is on the cytoplasmic side; sequence MASLGSSAGGRRP. Residues 14 to 35 form a helical membrane-spanning segment; it reads TVLLQIALFVVVAAIIINSSVC. Residues 36–88 are Extracellular-facing; that stretch reads LGATAVHDAAASGTGALDPNVPAVPTPGGAGQPYTGRGCRTVYGCRPPAGGQP.

The protein resides in the membrane. In terms of biological role, associated with pathogen defense. This Triticum aestivum (Wheat) protein is Protein WIR1A (WIR1A).